The primary structure comprises 231 residues: Demethylmenaquinone methyltransferase (231 aa).

Residues T62, D80, 100 to 101 (DA), and S117 contribute to the S-adenosyl-L-methionine site.

Belongs to the class I-like SAM-binding methyltransferase superfamily. MenG/UbiE family.

It carries out the reaction a 2-demethylmenaquinol + S-adenosyl-L-methionine = a menaquinol + S-adenosyl-L-homocysteine + H(+). The protein operates within quinol/quinone metabolism; menaquinone biosynthesis; menaquinol from 1,4-dihydroxy-2-naphthoate: step 2/2. Functionally, methyltransferase required for the conversion of demethylmenaquinol (DMKH2) to menaquinol (MKH2). The polypeptide is Demethylmenaquinone methyltransferase (Mycobacterium marinum (strain ATCC BAA-535 / M)).